A 73-amino-acid polypeptide reads, in one-letter code: Putative antitoxin VapB21 (73 aa).

The protein belongs to the UPF0330 family.

Functionally, possibly the antitoxin component of a type II toxin-antitoxin (TA) system. Its cognate toxin is VapC21 (Potential). This Sulfurisphaera tokodaii (strain DSM 16993 / JCM 10545 / NBRC 100140 / 7) (Sulfolobus tokodaii) protein is Putative antitoxin VapB21 (vapB21).